A 473-amino-acid chain; its full sequence is Protein translocase subunit SecA (473 aa).

ATP is bound at residue aspartate 127. A disordered region spans residues valine 424–lysine 447. Zn(2+) is bound by residues cysteine 457, cysteine 459, cysteine 468, and cysteine 469.

This sequence belongs to the SecA family. Monomer and homodimer. Part of the essential Sec protein translocation apparatus which comprises SecA, SecYEG and auxiliary proteins SecDF. Other proteins may also be involved. Zn(2+) serves as cofactor.

It localises to the cell membrane. The protein localises to the cytoplasm. The catalysed reaction is ATP + H2O + cellular proteinSide 1 = ADP + phosphate + cellular proteinSide 2.. In terms of biological role, part of the Sec protein translocase complex. Interacts with the SecYEG preprotein conducting channel. Has a central role in coupling the hydrolysis of ATP to the transfer of proteins into and across the cell membrane, serving as an ATP-driven molecular motor driving the stepwise translocation of polypeptide chains across the membrane. In Cytobacillus firmus (Bacillus firmus), this protein is Protein translocase subunit SecA.